The following is a 930-amino-acid chain: Isoleucine--tRNA ligase (930 aa).

A 'HIGH' region motif is present at residues 57–67; the sequence is PYANGHIHLGT. Glu559 provides a ligand contact to L-isoleucyl-5'-AMP. The short motif at 600 to 604 is the 'KMSKS' region element; sequence KMSKS. Lys603 lines the ATP pocket. Zn(2+) is bound by residues Cys899, Cys902, Cys918, and Cys921.

It belongs to the class-I aminoacyl-tRNA synthetase family. IleS type 1 subfamily. Monomer. It depends on Zn(2+) as a cofactor.

The protein resides in the cytoplasm. The enzyme catalyses tRNA(Ile) + L-isoleucine + ATP = L-isoleucyl-tRNA(Ile) + AMP + diphosphate. Functionally, catalyzes the attachment of isoleucine to tRNA(Ile). As IleRS can inadvertently accommodate and process structurally similar amino acids such as valine, to avoid such errors it has two additional distinct tRNA(Ile)-dependent editing activities. One activity is designated as 'pretransfer' editing and involves the hydrolysis of activated Val-AMP. The other activity is designated 'posttransfer' editing and involves deacylation of mischarged Val-tRNA(Ile). This is Isoleucine--tRNA ligase from Desulforudis audaxviator (strain MP104C).